The primary structure comprises 408 residues: Dual-specificity RNA methyltransferase RlmN (408 aa).

Residue E126 is the Proton acceptor of the active site. A Radical SAM core domain is found at E132–R373. C139 and C384 form a disulfide bridge. Residues C146, C150, and C153 each contribute to the [4Fe-4S] cluster site. Residues G210–E211, S242, S264–H266, and N341 contribute to the S-adenosyl-L-methionine site. The active-site S-methylcysteine intermediate is C384.

It belongs to the radical SAM superfamily. RlmN family. [4Fe-4S] cluster is required as a cofactor.

It is found in the cytoplasm. It catalyses the reaction adenosine(2503) in 23S rRNA + 2 reduced [2Fe-2S]-[ferredoxin] + 2 S-adenosyl-L-methionine = 2-methyladenosine(2503) in 23S rRNA + 5'-deoxyadenosine + L-methionine + 2 oxidized [2Fe-2S]-[ferredoxin] + S-adenosyl-L-homocysteine. The catalysed reaction is adenosine(37) in tRNA + 2 reduced [2Fe-2S]-[ferredoxin] + 2 S-adenosyl-L-methionine = 2-methyladenosine(37) in tRNA + 5'-deoxyadenosine + L-methionine + 2 oxidized [2Fe-2S]-[ferredoxin] + S-adenosyl-L-homocysteine. Functionally, specifically methylates position 2 of adenine 2503 in 23S rRNA and position 2 of adenine 37 in tRNAs. m2A2503 modification seems to play a crucial role in the proofreading step occurring at the peptidyl transferase center and thus would serve to optimize ribosomal fidelity. The polypeptide is Dual-specificity RNA methyltransferase RlmN (Bartonella tribocorum (strain CIP 105476 / IBS 506)).